The chain runs to 47 residues: Trifunctional NAD biosynthesis/regulator protein NadR (47 aa).

One can recognise an HTH cro/C1-type domain in the interval 7-47 (LKSAIKQKGCTLDEVAEPSGMTKGYLSQLLNRKIKARARRS). Positions 18–37 (LDEVAEPSGMTKGYLSQLLN) form a DNA-binding region, H-T-H motif.

The protein resides in the cell membrane. Its subcellular location is the cytoplasm. The enzyme catalyses beta-nicotinamide D-ribonucleotide + ATP + H(+) = diphosphate + NAD(+). It catalyses the reaction beta-nicotinamide D-riboside + ATP = beta-nicotinamide D-ribonucleotide + ADP + H(+). It participates in cofactor biosynthesis; NAD(+) biosynthesis [regulation]. The protein operates within cofactor biosynthesis; NAD(+) biosynthesis; NAD(+) from nicotinamide D-ribonucleotide: step 1/1. Functionally, this enzyme has three activities: DNA binding, nicotinamide mononucleotide (NMN) adenylyltransferase and ribosylnicotinamide (RN) kinase. The DNA-binding domain binds to the nadB operator sequence in an NAD- and ATP-dependent manner. As NAD levels increase within the cell, the affinity of NadR for the nadB operator regions of nadA, nadB, and pncB increases, repressing the transcription of these genes. The RN kinase activity catalyzes the phosphorylation of RN to form nicotinamide ribonucleotide. The NMN adenylyltransferase activity catalyzes the transfer of the AMP moiety of ATP to nicotinamide ribonucleotide to form NAD(+). The NMN adenylyltransferase domain also functions as the NAD and ATP sensor. This chain is Trifunctional NAD biosynthesis/regulator protein NadR (nadR), found in Klebsiella pneumoniae.